Consider the following 162-residue polypeptide: Interleukin-15 (162 aa).

Residues 1–29 (MRISKPHLRSISIQCYLCLLLNSHFLTEA) form the signal peptide. Residues 30–48 (GIHVFILGCFSAGLPKTEA) constitute a propeptide that is removed on maturation. Disulfide bonds link Cys-83–Cys-133 and Cys-90–Cys-136. Residue Asn-127 is glycosylated (N-linked (GlcNAc...) asparagine).

Belongs to the IL-15/IL-21 family. In terms of tissue distribution, most abundant in placenta and skeletal muscle. It is also detected in the heart, lung, liver and kidney. IL15-S21AA is preferentially expressed in tissues such as testis and thymus.

The protein resides in the secreted. Its subcellular location is the cytoplasm. It is found in the nucleus. In terms of biological role, cytokine that plays a major role in the development of inflammatory and protective immune responses to microbial invaders and parasites by modulating immune cells of both the innate and adaptive immune systems. Stimulates the proliferation of natural killer cells, T-cells and B-cells and promotes the secretion of several cytokines. In monocytes, induces the production of IL8 and monocyte chemotactic protein 1/CCL2, two chemokines that attract neutrophils and monocytes respectively to sites of infection. Unlike most cytokines, which are secreted in soluble form, IL15 is expressed in association with its high affinity IL15RA on the surface of IL15-producing cells and delivers signals to target cells that express IL2RB and IL2RG receptor subunits. Binding to its receptor triggers the phosphorylation of JAK1 and JAK3 and the recruitment and subsequent phosphorylation of signal transducer and activator of transcription-3/STAT3 and STAT5. In mast cells, induces the rapid tyrosine phosphorylation of STAT6 and thereby controls mast cell survival and release of cytokines such as IL4. The sequence is that of Interleukin-15 (IL15) from Homo sapiens (Human).